The primary structure comprises 110 residues: Integration host factor subunit beta (110 aa).

It belongs to the bacterial histone-like protein family. As to quaternary structure, heterodimer of an alpha and a beta chain.

Its function is as follows. This protein is one of the two subunits of integration host factor, a specific DNA-binding protein that functions in genetic recombination as well as in transcriptional and translational control. The protein is Integration host factor subunit beta of Parvibaculum lavamentivorans (strain DS-1 / DSM 13023 / NCIMB 13966).